A 252-amino-acid polypeptide reads, in one-letter code: MCHNKSSAPPTPAHISIQQNRTPGTDPVPYLHASSDTGSGDTIVLLTDIFGVTPFYRHLAAMLAEKGHDVVIPDVFHRVGHATDPGRDAALARRRQLDDRLAIEDIERTVAHTVDDQQTFGVLGFCLGGSFALLTAAAHPNQVTATYYAFPKGAPGAKVPVKPPLEAADAIDGPVLCHWGRDDYIDHEEIDQLEQILASAPGPSEIRWYDNAGHSFLAGLTEPNHPSTAAAHDSWQRTVEFFERYLTVGSAN.

The segment at 1 to 28 is disordered; the sequence is MCHNKSSAPPTPAHISIQQNRTPGTDPV. Catalysis depends on residues cysteine 126, aspartate 183, and histidine 214.

It belongs to the dienelactone hydrolase family.

It carries out the reaction 2-(5-oxo-2,5-dihydrofuran-2-ylidene)acetate + H2O = 4-oxohex-2-enedioate + H(+). It participates in aromatic compound metabolism; 3-chlorocatechol degradation. Ring cleavage of cyclic ester dienelactone to produce maleylacetate. The chain is Carboxymethylenebutenolidase (clcD) from Rhodococcus opacus (Nocardia opaca).